The following is a 315-amino-acid chain: Lipoyl synthase (315 aa).

Residues Cys62, Cys67, Cys73, Cys88, Cys92, Cys95, and Ser302 each coordinate [4Fe-4S] cluster. The Radical SAM core domain maps to 74–291 (FGKGTATFMI…ETEALAMGFK (218 aa)).

Belongs to the radical SAM superfamily. Lipoyl synthase family. [4Fe-4S] cluster serves as cofactor.

Its subcellular location is the cytoplasm. The enzyme catalyses [[Fe-S] cluster scaffold protein carrying a second [4Fe-4S](2+) cluster] + N(6)-octanoyl-L-lysyl-[protein] + 2 oxidized [2Fe-2S]-[ferredoxin] + 2 S-adenosyl-L-methionine + 4 H(+) = [[Fe-S] cluster scaffold protein] + N(6)-[(R)-dihydrolipoyl]-L-lysyl-[protein] + 4 Fe(3+) + 2 hydrogen sulfide + 2 5'-deoxyadenosine + 2 L-methionine + 2 reduced [2Fe-2S]-[ferredoxin]. It participates in protein modification; protein lipoylation via endogenous pathway; protein N(6)-(lipoyl)lysine from octanoyl-[acyl-carrier-protein]: step 2/2. Catalyzes the radical-mediated insertion of two sulfur atoms into the C-6 and C-8 positions of the octanoyl moiety bound to the lipoyl domains of lipoate-dependent enzymes, thereby converting the octanoylated domains into lipoylated derivatives. The chain is Lipoyl synthase from Aromatoleum aromaticum (strain DSM 19018 / LMG 30748 / EbN1) (Azoarcus sp. (strain EbN1)).